Here is a 460-residue protein sequence, read N- to C-terminus: tRNA modification GTPase MnmE (460 aa).

(6S)-5-formyl-5,6,7,8-tetrahydrofolate contacts are provided by Arg26, Glu88, and Arg127. Residues 222-381 (GLKVAIVGRP…LESAILSKVQ (160 aa)) form the TrmE-type G domain. Residue Asn232 participates in K(+) binding. Residues 232–237 (NVGKSS), 251–257 (TELPGTT), and 276–279 (DTAG) each bind GTP. Position 236 (Ser236) interacts with Mg(2+). K(+) is bound by residues Thr251, Leu253, and Thr256. Mg(2+) is bound at residue Thr257. Lys460 provides a ligand contact to (6S)-5-formyl-5,6,7,8-tetrahydrofolate.

The protein belongs to the TRAFAC class TrmE-Era-EngA-EngB-Septin-like GTPase superfamily. TrmE GTPase family. In terms of assembly, homodimer. Heterotetramer of two MnmE and two MnmG subunits. K(+) serves as cofactor.

The protein resides in the cytoplasm. Exhibits a very high intrinsic GTPase hydrolysis rate. Involved in the addition of a carboxymethylaminomethyl (cmnm) group at the wobble position (U34) of certain tRNAs, forming tRNA-cmnm(5)s(2)U34. This chain is tRNA modification GTPase MnmE, found in Cyanothece sp. (strain PCC 7425 / ATCC 29141).